Consider the following 154-residue polypeptide: Myoglobin (154 aa).

The Globin domain maps to 2 to 148; the sequence is GLSDGEWQLV…FRNDMAAKYK (147 aa). Position 4 is a phosphoserine (serine 4). Histidine 65 lines the nitrite pocket. Histidine 65 is an O2 binding site. Threonine 68 carries the post-translational modification Phosphothreonine. A heme b-binding site is contributed by histidine 94.

The protein belongs to the globin family. In terms of assembly, monomeric.

Its subcellular location is the cytoplasm. The protein resides in the sarcoplasm. It carries out the reaction Fe(III)-heme b-[protein] + nitric oxide + H2O = Fe(II)-heme b-[protein] + nitrite + 2 H(+). The enzyme catalyses H2O2 + AH2 = A + 2 H2O. In terms of biological role, monomeric heme protein which primary function is to store oxygen and facilitate its diffusion within muscle tissues. Reversibly binds oxygen through a pentacoordinated heme iron and enables its timely and efficient release as needed during periods of heightened demand. Depending on the oxidative conditions of tissues and cells, and in addition to its ability to bind oxygen, it also has a nitrite reductase activity whereby it regulates the production of bioactive nitric oxide. Under stress conditions, like hypoxia and anoxia, it also protects cells against reactive oxygen species thanks to its pseudoperoxidase activity. The polypeptide is Myoglobin (MB) (Sus scrofa (Pig)).